A 684-amino-acid chain; its full sequence is MDEMIPKPLISNDNEMMHGHGYTTMVHGNNEILNGNELAVHAEVIPSASTRGQKRKSAIWEHFTLVDVSDGCKRASCIHCNQSLAYSSGSKNSGTSHLTRHIAEWCRVLKDRQKSRRYTTYNSSNENASFDQERSCLRLAKMIILNDYPLHIVQQPAFLSFVDSVQPNFKMVDIGTIETEVYAIYLKEKDHLQQALANIPGRISLTVGSLTTNQSIRYISLAAQFIDSEWRLHRRVLKVMMAPWPQSENAVSRAIIKCLSDWNMQDKLFTITLEHDCSSHDIYSANLRNHLSGDNILMLKGQTFAVRCYANILNAVAHGVLASVHNVIYLIRESIKFIKADDAHENKFAEIAVELKITSNNSLCLDVTSEWNTTYLMLLAALDYRQVFTLLESYYDNYGTAPSTEDWKKVEAACGFLKLLYAFTLNIMSAEGNHQTANMFFHDAWVLQLELQNGMAHGDDVIRGIVIGIHEKFDKYWKDCNVVLAIAVAMDPRFKMKMVEFAYSKIYGPTDAAKYVKLVDDAILDLYKEYAAQPELLPLSPIYVDQVPADGLPFIETGGAPATASPSTAAAGAGLVDFDMYLSEVTTMGQPFKHELELYLEEALTQRTPDFDVLKWWQDNTLKYPTLSRMARDVLAIPMSTVGVGSSVFLPDNGSRSLDDYRSSLRPELVEALLCAKDWLQYSP.

A BED-type zinc finger spans residues 54–113 (KRKSAIWEHFTLVDVSDGCKRASCIHCNQSLAYSSGSKNSGTSHLTRHIAEWCRVLKDRQ). Positions 77, 80, 101, and 106 each coordinate Zn(2+). The tract at residues 595-680 (ELELYLEEAL…EALLCAKDWL (86 aa)) is HATC (Hobo-Ac-Tam3) domain.

In terms of assembly, homodimer.

It is found in the nucleus. Its function is as follows. Transposase-like protein that is essential for plant growth and development. May regulate global gene expression by recruiting other cellular factors. This is Zinc finger BED domain-containing protein RICESLEEPER 4 from Oryza sativa subsp. japonica (Rice).